A 149-amino-acid chain; its full sequence is Flagellar basal-body protein FlbY (149 aa).

In terms of assembly, the basal body constitutes a major portion of the flagellar organelle and consists of five rings (E,L,P,S, and M) mounted on a central rod.

The protein localises to the bacterial flagellum basal body. The polypeptide is Flagellar basal-body protein FlbY (flbY) (Caulobacter vibrioides (strain ATCC 19089 / CIP 103742 / CB 15) (Caulobacter crescentus)).